Here is a 261-residue protein sequence, read N- to C-terminus: Kynurenine formamidase (261 aa).

Phosphoserine is present on S9. Residues 36–40 (HGGAW) carry the HGGXW motif. S110 acts as the Nucleophile in catalysis. Residues D211 and H243 contribute to the active site.

The protein belongs to the kynurenine formamidase family. Homodimer.

It carries out the reaction N-formyl-L-kynurenine + H2O = L-kynurenine + formate + H(+). The protein operates within amino-acid degradation; L-tryptophan degradation via kynurenine pathway; L-kynurenine from L-tryptophan: step 2/2. In terms of biological role, catalyzes the hydrolysis of N-formyl-L-kynurenine to L-kynurenine, the second step in the kynurenine pathway of tryptophan degradation. Kynurenine may be further oxidized to nicotinic acid, NAD(H) and NADP(H). Required for elimination of toxic metabolites. The polypeptide is Kynurenine formamidase (Saccharomyces cerevisiae (strain ATCC 204508 / S288c) (Baker's yeast)).